Consider the following 504-residue polypeptide: Cobyric acid synthase (504 aa).

The GATase cobBQ-type domain occupies 254 to 442 (AIDVAVIRYP…MHDLFHNDMF (189 aa)). Cys-336 functions as the Nucleophile in the catalytic mechanism. His-434 is a catalytic residue.

Belongs to the CobB/CobQ family. CobQ subfamily.

The protein operates within cofactor biosynthesis; adenosylcobalamin biosynthesis. Catalyzes amidations at positions B, D, E, and G on adenosylcobyrinic A,C-diamide. NH(2) groups are provided by glutamine, and one molecule of ATP is hydrogenolyzed for each amidation. The polypeptide is Cobyric acid synthase (Anoxybacillus flavithermus (strain DSM 21510 / WK1)).